Here is a 273-residue protein sequence, read N- to C-terminus: Type II restriction enzyme HgiCII (273 aa).

Belongs to the TdeIII type II restriction endonuclease family.

The enzyme catalyses Endonucleolytic cleavage of DNA to give specific double-stranded fragments with terminal 5'-phosphates.. A P subtype restriction enzyme that recognizes the double-stranded sequence 5'-GGWCC-3' and cleaves after G-1. This chain is Type II restriction enzyme HgiCII, found in Herpetosiphon aurantiacus (Herpetosiphon giganteus).